The primary structure comprises 292 residues: Ribosomal RNA small subunit methyltransferase A (292 aa).

Residues Asn-29, Leu-31, Gly-56, Glu-77, Asp-102, and Asn-127 each contribute to the S-adenosyl-L-methionine site.

This sequence belongs to the class I-like SAM-binding methyltransferase superfamily. rRNA adenine N(6)-methyltransferase family. RsmA subfamily.

It is found in the cytoplasm. It catalyses the reaction adenosine(1518)/adenosine(1519) in 16S rRNA + 4 S-adenosyl-L-methionine = N(6)-dimethyladenosine(1518)/N(6)-dimethyladenosine(1519) in 16S rRNA + 4 S-adenosyl-L-homocysteine + 4 H(+). In terms of biological role, specifically dimethylates two adjacent adenosines (A1518 and A1519) in the loop of a conserved hairpin near the 3'-end of 16S rRNA in the 30S particle. May play a critical role in biogenesis of 30S subunits. This is Ribosomal RNA small subunit methyltransferase A from Bacillus pumilus (strain SAFR-032).